A 472-amino-acid chain; its full sequence is 3-isopropylmalate dehydratase large subunit (472 aa).

Residues Cys347, Cys407, and Cys410 each coordinate [4Fe-4S] cluster.

Belongs to the aconitase/IPM isomerase family. LeuC type 1 subfamily. In terms of assembly, heterodimer of LeuC and LeuD. It depends on [4Fe-4S] cluster as a cofactor.

It catalyses the reaction (2R,3S)-3-isopropylmalate = (2S)-2-isopropylmalate. It participates in amino-acid biosynthesis; L-leucine biosynthesis; L-leucine from 3-methyl-2-oxobutanoate: step 2/4. Functionally, catalyzes the isomerization between 2-isopropylmalate and 3-isopropylmalate, via the formation of 2-isopropylmaleate. The polypeptide is 3-isopropylmalate dehydratase large subunit (Synechococcus sp. (strain CC9902)).